We begin with the raw amino-acid sequence, 506 residues long: Maturase K (506 aa).

It belongs to the intron maturase 2 family. MatK subfamily.

The protein localises to the plastid. It is found in the chloroplast. In terms of biological role, usually encoded in the trnK tRNA gene intron. Probably assists in splicing its own and other chloroplast group II introns. This Lactuca sativa (Garden lettuce) protein is Maturase K.